Here is a 121-residue protein sequence, read N- to C-terminus: Large ribosomal subunit protein bL20 (121 aa).

It belongs to the bacterial ribosomal protein bL20 family.

Its function is as follows. Binds directly to 23S ribosomal RNA and is necessary for the in vitro assembly process of the 50S ribosomal subunit. It is not involved in the protein synthesizing functions of that subunit. The sequence is that of Large ribosomal subunit protein bL20 from Chlamydia felis (strain Fe/C-56) (Chlamydophila felis).